A 504-amino-acid polypeptide reads, in one-letter code: 26S proteasome non-ATPase regulatory subunit 3 (504 aa).

Residues 254–434 (ARYFYYQGRI…GYLQSRENID (181 aa)) enclose the PCI domain. The tract at residues 485–504 (KEEMERQAEESSDNEGDSDF) is disordered. The span at 494-504 (ESSDNEGDSDF) shows a compositional bias: acidic residues.

The protein belongs to the proteasome subunit S3 family. As to quaternary structure, the 26S proteasome is composed of a core protease, known as the 20S proteasome, capped at one or both ends by the 19S regulatory complex (RC). The RC is composed of at least 18 different subunits in two subcomplexes, the base and the lid, which form the portions proximal and distal to the 20S proteolytic core, respectively.

Acts as a regulatory subunit of the 26 proteasome which is involved in the ATP-dependent degradation of ubiquitinated proteins. In Dictyostelium discoideum (Social amoeba), this protein is 26S proteasome non-ATPase regulatory subunit 3 (psmD3).